A 343-amino-acid polypeptide reads, in one-letter code: N-acetyl-gamma-glutamyl-phosphate reductase (343 aa).

C147 is a catalytic residue.

This sequence belongs to the NAGSA dehydrogenase family. Type 1 subfamily.

The protein resides in the cytoplasm. The catalysed reaction is N-acetyl-L-glutamate 5-semialdehyde + phosphate + NADP(+) = N-acetyl-L-glutamyl 5-phosphate + NADPH + H(+). It participates in amino-acid biosynthesis; L-arginine biosynthesis; N(2)-acetyl-L-ornithine from L-glutamate: step 3/4. Functionally, catalyzes the NADPH-dependent reduction of N-acetyl-5-glutamyl phosphate to yield N-acetyl-L-glutamate 5-semialdehyde. The polypeptide is N-acetyl-gamma-glutamyl-phosphate reductase (Listeria innocua serovar 6a (strain ATCC BAA-680 / CLIP 11262)).